Here is a 592-residue protein sequence, read N- to C-terminus: Bifunctional enzyme BirA/CoaX (592 aa).

Residues 1 to 329 (MTVLKPSHWR…ISLRPDNRSV (329 aa)) are biotin--protein ligase. A BPL/LPL catalytic domain is found at 83 to 259 (QTALKHECAS…ELGAVLEQYA (177 aa)). The segment at 336 to 592 (DSERFLLLEG…AAEGGESEHA (257 aa)) is type III pantothenate kinase. 344 to 351 (EGGNSRLK) lines the ATP pocket. Substrate is bound by residues Tyr-426 and 433 to 436 (GSDR). Asp-435 serves as the catalytic Proton acceptor. Thr-458 contacts ATP. Thr-508 is a substrate binding site.

The protein in the N-terminal section; belongs to the biotin--protein ligase family. In the C-terminal section; belongs to the type III pantothenate kinase family. The cofactor is NH4(+). Requires K(+) as cofactor.

Its subcellular location is the cytoplasm. It carries out the reaction biotin + L-lysyl-[protein] + ATP = N(6)-biotinyl-L-lysyl-[protein] + AMP + diphosphate + H(+). The enzyme catalyses (R)-pantothenate + ATP = (R)-4'-phosphopantothenate + ADP + H(+). The protein operates within cofactor biosynthesis; coenzyme A biosynthesis; CoA from (R)-pantothenate: step 1/5. Its function is as follows. Activates biotin to form biotinyl-5'-adenylate and transfers the biotin moiety to biotin-accepting proteins. Catalyzes the phosphorylation of pantothenate (Pan), the first step in CoA biosynthesis. The polypeptide is Bifunctional enzyme BirA/CoaX (birA/coaX) (Neisseria gonorrhoeae (strain ATCC 700825 / FA 1090)).